The chain runs to 147 residues: Large ribosomal subunit protein uL16c (147 aa).

Positions Met1–Met17 are enriched in basic residues. The tract at residues Met1–Ile20 is disordered.

The protein belongs to the universal ribosomal protein uL16 family. As to quaternary structure, part of the 50S ribosomal subunit.

The protein resides in the plastid. The protein localises to the chloroplast. The chain is Large ribosomal subunit protein uL16c from Ipomoea purpurea (Common morning glory).